Here is a 712-residue protein sequence, read N- to C-terminus: MFDTHTVEIEWAGRPLKLETGKIARQADGAVLATYGETVVLATVVSAKAPKPGQDFFPLTVNYQEKTYAAGKIPGGYFKREGRPSENETLVSRLIDRPIRPLFPEGYKNDTQVVVTVIQHDLENNPDILSMVATSAALTLSGVPFMGPVGGARVGYINGEYVLNPHLDEMDESSLDLVVAGTYDAVLMVESEAKELPEDVMLGAVMFGHKGFQPVLDAIIKLAEVAAKEPRDFQPEDYSALESEMLGLAEAELREAYKITQKADRYAAVDAVKAKVKAHFLPEEGEAKYTAEEVGAIFKHLQAKIVRWNILDTKSRIDGRDLETVRPIVSEVGLLPRTHGSALFTRGETQAIVVATLGTGEDEQYVDSLTGMYKERFLLHYNFPPYSVGETGRMGSPGRREIGHGKLAWRAIRPMLPSAEQFPYTLRVVSEITESNGSSSMATVCGTSLALMDAGVPLAKPVAGIAMGLILEGDRFAVLSDILGDEDHLGDMDFKVAGTADGITSLQMDIKIAGITEEIMKVALSQAQGGRTHILGEMAKAITESRGQLGEFAPRIEVMNIPVDKIREVIGSGGKVIREIVEKTGAKINIEDDGTVKIASSSGKEIEAARKWIHSIVAEPEIGQIYEGTVVKTADFGAFVNFFGARDGLVHISQLASERVAKTQDVVKEGDKVWVKLLGFDERGKVRLSMKVVDQATGQEIANEKKKEEAAE.

Asp-487 and Asp-493 together coordinate Mg(2+). Residues 554-613 enclose the KH domain; the sequence is PRIEVMNIPVDKIREVIGSGGKVIREIVEKTGAKINIEDDGTVKIASSSGKEIEAARKWI. The 69-residue stretch at 623–691 folds into the S1 motif domain; the sequence is GQIYEGTVVK…ERGKVRLSMK (69 aa).

The protein belongs to the polyribonucleotide nucleotidyltransferase family. Mg(2+) is required as a cofactor.

The protein resides in the cytoplasm. It carries out the reaction RNA(n+1) + phosphate = RNA(n) + a ribonucleoside 5'-diphosphate. In terms of biological role, involved in mRNA degradation. Catalyzes the phosphorolysis of single-stranded polyribonucleotides processively in the 3'- to 5'-direction. The protein is Polyribonucleotide nucleotidyltransferase of Rhizobium etli (strain CIAT 652).